The primary structure comprises 203 residues: Pyridoxine/pyridoxamine 5'-phosphate oxidase (203 aa).

FMN contacts are provided by residues 50–55 (RMVLLK), 65–66 (YT), Lys-72, and Gln-94. Lys-55 lines the substrate pocket. Substrate-binding residues include Tyr-112, Arg-116, and Ser-120. Residues 129–130 (QS) and Trp-174 each bind FMN. 180–182 (RLH) contacts substrate. Arg-184 serves as a coordination point for FMN.

The protein belongs to the pyridoxamine 5'-phosphate oxidase family. Homodimer. FMN is required as a cofactor.

The catalysed reaction is pyridoxamine 5'-phosphate + O2 + H2O = pyridoxal 5'-phosphate + H2O2 + NH4(+). It carries out the reaction pyridoxine 5'-phosphate + O2 = pyridoxal 5'-phosphate + H2O2. It participates in cofactor metabolism; pyridoxal 5'-phosphate salvage; pyridoxal 5'-phosphate from pyridoxamine 5'-phosphate: step 1/1. The protein operates within cofactor metabolism; pyridoxal 5'-phosphate salvage; pyridoxal 5'-phosphate from pyridoxine 5'-phosphate: step 1/1. Functionally, catalyzes the oxidation of either pyridoxine 5'-phosphate (PNP) or pyridoxamine 5'-phosphate (PMP) into pyridoxal 5'-phosphate (PLP). The protein is Pyridoxine/pyridoxamine 5'-phosphate oxidase of Brucella anthropi (strain ATCC 49188 / DSM 6882 / CCUG 24695 / JCM 21032 / LMG 3331 / NBRC 15819 / NCTC 12168 / Alc 37) (Ochrobactrum anthropi).